The primary structure comprises 271 residues: Insulin-like growth factor-binding protein 5 (271 aa).

The N-terminal stretch at 1 to 19 is a signal peptide; the sequence is MVLTAVLLLLAACAGSAQG. Positions 22-102 constitute an IGFBP N-terminal domain; that stretch reads SFVHCEPCDE…LHGRGVCLNE (81 aa). 6 disulfide bridges follow: Cys26-Cys52, Cys29-Cys54, Cys37-Cys55, Cys44-Cys58, Cys66-Cys79, and Cys73-Cys99. Residues 109–121 are compositionally biased toward basic and acidic residues; the sequence is AKIERDSREHEEP. The interval 109–129 is disordered; sequence AKIERDSREHEEPTTSEMAEE. At Ser115 the chain carries Phosphoserine. The Thyroglobulin type-1 domain occupies 188–262; the sequence is QGPCRRHMEA…MEYVDGDFQC (75 aa). 3 cysteine pairs are disulfide-bonded: Cys191–Cys218, Cys229–Cys240, and Cys242–Cys262.

As to quaternary structure, interacts with IGF1; this interaction enhances the growth stimulatory effects of IGF1 on fibroblasts. Interacts with CAV1; this interaction allows trafficking of IGFBP5 from the plasma membrane to the nucleus. Interacts with NCL; this interaction is necessary for IGFBP5 localization to the nucleus.

It is found in the secreted. It localises to the cytoplasm. Its subcellular location is the nucleus. In terms of biological role, multifunctional protein that plays a critical role in regulating the availability of IGFs to their receptors and thereby regulates IGF-mediated cellular processes including proliferation, differentiation, and apoptosis in a cell-type specific manner. Increases the cell proliferation of osteoblasts, intestinal smooth muscle cells and neuroblastoma cells. Enhances adhesion and survival of epithelial cells but decreases adhesion of mesenchymal cells. Once secreted, acts as a major mediator of mTORC1-dependent feedback inhibition of IGF1 signaling. Also plays a role in the induction of extracellular matrix (ECM) production and deposition independently of its nuclear translocation and binding to IGFs. Acts itself as a growth factor that can act independently of IGFs to regulate bone formation. Acts as a ligand for the ROR1 receptor which triggers formation of ROR1/HER2 heterodimer to enhance CREB oncogenic signaling. This Bos taurus (Bovine) protein is Insulin-like growth factor-binding protein 5 (IGFBP5).